The chain runs to 326 residues: Probable cell division protein WhiA (326 aa).

The H-T-H motif DNA-binding region spans 275-308 (SLDELGHYADPPMTKDAVAGRIRRLLAMADKRAS).

The protein belongs to the WhiA family.

Involved in cell division and chromosome segregation. In Leifsonia xyli subsp. xyli (strain CTCB07), this protein is Probable cell division protein WhiA.